Here is a 123-residue protein sequence, read N- to C-terminus: Small ribosomal subunit protein uS12 (123 aa).

Asp-89 carries the 3-methylthioaspartic acid modification.

It belongs to the universal ribosomal protein uS12 family. As to quaternary structure, part of the 30S ribosomal subunit. Contacts proteins S8 and S17. May interact with IF1 in the 30S initiation complex.

In terms of biological role, with S4 and S5 plays an important role in translational accuracy. Interacts with and stabilizes bases of the 16S rRNA that are involved in tRNA selection in the A site and with the mRNA backbone. Located at the interface of the 30S and 50S subunits, it traverses the body of the 30S subunit contacting proteins on the other side and probably holding the rRNA structure together. The combined cluster of proteins S8, S12 and S17 appears to hold together the shoulder and platform of the 30S subunit. The polypeptide is Small ribosomal subunit protein uS12 (Methylobacterium radiotolerans (strain ATCC 27329 / DSM 1819 / JCM 2831 / NBRC 15690 / NCIMB 10815 / 0-1)).